Consider the following 368-residue polypeptide: C-glycoside deglycosidase alpha subunit (368 aa).

A divalent metal cation is bound at residue Glu-145. Catalysis depends on His-147, which acts as the Proton acceptor. The a divalent metal cation site is built by Asp-177, His-275, and Glu-311.

The protein belongs to the C-glycoside deglycosidase alpha subunit family. As to quaternary structure, heterodimer composed of an alpha subunit (CarB) and a beta subunit (CarC). The cofactor is a divalent metal cation.

It carries out the reaction 3''-dehydroisovitexin = 1,5-anhydro-D-erythro-hex-1-en-3-ulose + apigenin. The catalysed reaction is 3''-dehydroisoorientin = 1,5-anhydro-D-erythro-hex-1-en-3-ulose + luteolin. In terms of biological role, carbon-carbon bond-cleaving enzyme which participates in the metabolism of C-glycosides. Acts on the C6-glycosylated compounds 3''-dehydroisovitexin (3''-oxo-isovitexin) and 3''-dehydroisoorientin (3''-oxo-homoorientin). Shows weak activity with 3'-dehydromangiferin (3'-oxo-mangiferin). This chain is C-glycoside deglycosidase alpha subunit, found in Microbacterium trichothecenolyticum (Aureobacterium trichothecenolyticum).